Consider the following 230-residue polypeptide: Orotidine 5'-phosphate decarboxylase (230 aa).

Substrate contacts are provided by residues D10, K32, 59–68 (DLKYHDIPNT), T119, R180, Q189, G209, and R210. The active-site Proton donor is the K61.

It belongs to the OMP decarboxylase family. Type 1 subfamily. Homodimer.

The enzyme catalyses orotidine 5'-phosphate + H(+) = UMP + CO2. It participates in pyrimidine metabolism; UMP biosynthesis via de novo pathway; UMP from orotate: step 2/2. Functionally, catalyzes the decarboxylation of orotidine 5'-monophosphate (OMP) to uridine 5'-monophosphate (UMP). The polypeptide is Orotidine 5'-phosphate decarboxylase (Glaesserella parasuis serovar 5 (strain SH0165) (Haemophilus parasuis)).